Reading from the N-terminus, the 426-residue chain is Histidine--tRNA ligase (426 aa).

It belongs to the class-II aminoacyl-tRNA synthetase family. As to quaternary structure, homodimer.

Its subcellular location is the cytoplasm. It carries out the reaction tRNA(His) + L-histidine + ATP = L-histidyl-tRNA(His) + AMP + diphosphate + H(+). In Pseudoalteromonas translucida (strain TAC 125), this protein is Histidine--tRNA ligase.